We begin with the raw amino-acid sequence, 716 residues long: 1,4-alpha-glucan branching enzyme GlgB (716 aa).

The active-site Nucleophile is Asp-398. Glu-451 (proton donor) is an active-site residue.

Belongs to the glycosyl hydrolase 13 family. GlgB subfamily. In terms of assembly, monomer.

The enzyme catalyses Transfers a segment of a (1-&gt;4)-alpha-D-glucan chain to a primary hydroxy group in a similar glucan chain.. Its pathway is glycan biosynthesis; glycogen biosynthesis. Catalyzes the formation of the alpha-1,6-glucosidic linkages in glycogen by scission of a 1,4-alpha-linked oligosaccharide from growing alpha-1,4-glucan chains and the subsequent attachment of the oligosaccharide to the alpha-1,6 position. In Nitrobacter winogradskyi (strain ATCC 25391 / DSM 10237 / CIP 104748 / NCIMB 11846 / Nb-255), this protein is 1,4-alpha-glucan branching enzyme GlgB.